A 271-amino-acid polypeptide reads, in one-letter code: MQAACWYVLLLLQPTVYLVTCANLTNGGKSELLKSGSSKSTLKHIWTESSKDLSISRLLSQTFRGKENDTDLDLRYDTPEPYSEQDLWDWLRNSTDLQEPRPRAKRRPIVKTGKFKKMFGWGDFHSNIKTVKLNLLITGKIVDHGNGTFSVYFRHNSTGQGNVSVSLVPPTKIVEFDLAQQTVIDAKDSKSFNCRIEYEKVDKATKNTLCNYDPSKTCYQEQTQSHVSWLCSKPFKVICIYISFYSTDYKLVQKVCPDYNYHSDTPYFPSG.

Positions 1–21 (MQAACWYVLLLLQPTVYLVTC) are cleaved as a signal peptide. Residues 22 to 97 (ANLTNGGKSE…WDWLRNSTDL (76 aa)) form an II region. N-linked (GlcNAc...) asparagine glycans are attached at residues asparagine 23, asparagine 68, asparagine 93, asparagine 146, asparagine 156, and asparagine 162. An III region spans residues 98–176 (QEPRPRAKRR…LVPPTKIVEF (79 aa)). The interval 177–185 (DLAQQTVID) is IV (linker domain). The interval 186–271 (AKDSKSFNCR…HSDTPYFPSG (86 aa)) is v (Cys-rich).

The protein belongs to the neurexophilin family. Post-translationally, may be proteolytically processed at the boundary between the N-terminal non-conserved and the central conserved domain in neuron-like cells. In terms of tissue distribution, brain, only in a scattered subpopulation of neurons that probably represent inhibitory interneurons.

It localises to the secreted. In terms of biological role, may be signaling molecules that resemble neuropeptides. Ligand for alpha-neurexins. This is Neurexophilin-1 (Nxph1) from Mus musculus (Mouse).